A 312-amino-acid polypeptide reads, in one-letter code: ADP-L-glycero-D-manno-heptose-6-epimerase (312 aa).

Residues 10-11, 31-32, lysine 38, lysine 53, 75-79, and asparagine 92 contribute to the NADP(+) site; these read FI, DN, and EGACS. Tyrosine 140 functions as the Proton acceptor in the catalytic mechanism. Lysine 144 lines the NADP(+) pocket. Asparagine 169 contacts substrate. 2 residues coordinate NADP(+): valine 170 and lysine 178. Residue lysine 178 is the Proton acceptor of the active site. Substrate is bound by residues serine 180, histidine 187, 201–204, arginine 209, and tyrosine 274; that span reads FEGS.

The protein belongs to the NAD(P)-dependent epimerase/dehydratase family. HldD subfamily. In terms of assembly, homopentamer. NADP(+) serves as cofactor.

The catalysed reaction is ADP-D-glycero-beta-D-manno-heptose = ADP-L-glycero-beta-D-manno-heptose. It functions in the pathway nucleotide-sugar biosynthesis; ADP-L-glycero-beta-D-manno-heptose biosynthesis; ADP-L-glycero-beta-D-manno-heptose from D-glycero-beta-D-manno-heptose 7-phosphate: step 4/4. In terms of biological role, catalyzes the interconversion between ADP-D-glycero-beta-D-manno-heptose and ADP-L-glycero-beta-D-manno-heptose via an epimerization at carbon 6 of the heptose. This is ADP-L-glycero-D-manno-heptose-6-epimerase from Proteus mirabilis (strain HI4320).